The following is a 425-amino-acid chain: Proline--tRNA ligase (425 aa).

It belongs to the class-II aminoacyl-tRNA synthetase family. ProS type 2 subfamily. As to quaternary structure, homodimer.

The protein resides in the cytoplasm. The enzyme catalyses tRNA(Pro) + L-proline + ATP = L-prolyl-tRNA(Pro) + AMP + diphosphate. In terms of biological role, catalyzes the attachment of proline to tRNA(Pro) in a two-step reaction: proline is first activated by ATP to form Pro-AMP and then transferred to the acceptor end of tRNA(Pro). This is Proline--tRNA ligase from Wolbachia sp. subsp. Brugia malayi (strain TRS).